Here is a 1364-residue protein sequence, read N- to C-terminus: Serine protease EatA (1364 aa).

A signal peptide spans 1 to 56 (MNKVFSLKYSFLAKGFIAVSELARRVSVKGKLKSASSIIISPITIAIVSYAPPSLA). A Peptidase S6 domain is found at 57–307 (ATVNADISYQ…VVTTQDFLHQ (251 aa)). Catalysis depends on charge relay system residues His-134, Asp-162, and Ser-267. The Autotransporter domain maps to 1098–1364 (DSQGDAGGWA…SINANFRYYF (267 aa)).

In terms of processing, cleaved to release the mature protein from the outer membrane.

The protein localises to the periplasm. Its subcellular location is the secreted. It is found in the cell surface. It localises to the cell outer membrane. With respect to regulation, inhibited by phenylmethylsulfonyl fluoride. Its function is as follows. Autotransporter serine protease probably involved in virulence. The sequence is that of Serine protease EatA (eatA) from Escherichia coli O78:H11 (strain H10407 / ETEC).